Here is a 71-residue protein sequence, read N- to C-terminus: MTVQDYLLKFRKISSLESLEKLFDHLNYTLTDDMDIVNMYRAADHRRAELVSGGRLFDVGQVPQSVWRYVQ.

Belongs to the Hha/YmoA/Cnu family. As to quaternary structure, forms complexes with both H-NS and StpA.

Functionally, binds to H-NS and modified the range of genes it silences; H-NS alonge silences core gene while the H-NS-Hha complex (and presumably also H-NS-YdgT) silences genes acquired by horizontal gene transfer. Plays a role silencing virulence factors in the absence of factors that induce pathogenicity. The complex formed with H-NS binds to the specific 26-bp cnb site in the origin of replication oriC. In Salmonella choleraesuis (strain SC-B67), this protein is Transcription modulator YdgT (ydgT).